We begin with the raw amino-acid sequence, 547 residues long: Sodium/hydrogen exchanger 9B2 (547 aa).

A disordered region spans residues 1–68 (MEDEDKTAEC…PQDSPTEPNG (68 aa)). Over 1–86 (MEDEDKTAEC…ACPPRGCLAR (86 aa)) the chain is Cytoplasmic. A compositionally biased stretch (basic and acidic residues) spans 23–45 (APPHHELQEERVMSLRGTDRSEP). At Ser49 the chain carries Phosphoserine. The helical transmembrane segment at 87–104 (VITNGTMVVLLWAMVWSV) threads the bilayer. Topologically, residues 105-113 (TGPECLPGG) are extracellular. Residues 114-133 (NLFGIIILFYCSITGGKLFG) form a helical membrane-spanning segment. Over 134-144 (LIKFPTLPPLP) the chain is Cytoplasmic. The chain crosses the membrane as a helical span at residues 145-161 (PLLGMLLAGFLLRNIPV). The Extracellular segment spans residues 162–171 (INDSVRIQHK). The chain crosses the membrane as a helical span at residues 172-189 (WSSSLRSIALSVILVRAG). Topologically, residues 190 to 200 (LGLDSKALRKL) are cytoplasmic. Residues 201–227 (KGVCVRLAMGPCIVEACASAILSHFLM) traverse the membrane as a helical segment. Residues 228-233 (GLPWQW) are Extracellular-facing. A helical transmembrane segment spans residues 234 to 242 (GFILGFVVG). Residues 243-270 (AVSPAVVVPSMLLLQEGGYGVGKGIPTL) lie on the Cytoplasmic side of the membrane. Val244, Gly275, Asp278, and Asp279 together coordinate Na(+). A helical membrane pass occupies residues 271–290 (LMAAGSFDDILAITGFNTCL). The Extracellular segment spans residues 291–300 (GVAFSTGSTV). A helical transmembrane segment spans residues 301–324 (FNIFRGILEVVIGVAAGSFLGFFI). The Cytoplasmic segment spans residues 325–339 (QYFPSRDQDNLVWKR). A helical transmembrane segment spans residues 340–357 (AFLVLGFAVLAVFSSVYF). Residues 358–361 (SFPG) lie on the Extracellular side of the membrane. A helical membrane pass occupies residues 362–373 (SGGLCTLVMAFL). Topologically, residues 374 to 390 (AGMRWTDKKSEVEKVIA) are cytoplasmic. The chain crosses the membrane as a helical span at residues 391–411 (VTWDVFQPLLFGLIGAEVSIV). Residues 412–417 (SLRAET) are Extracellular-facing. Residues 418 to 440 (VGLCVATLSIAVLIRILTTFLMV) form a helical membrane-spanning segment. The Cytoplasmic segment spans residues 441-461 (CFAGFNIKEKIFISFAWLPKA). The helical transmembrane segment at 462 to 473 (TVQAAIGSVALD) threads the bilayer. Topologically, residues 474-486 (TARSHGEKQLEDY) are extracellular. Residues 487-509 (GMDVLTVAFLAILITAPIGSLLI) traverse the membrane as a helical segment. The Cytoplasmic portion of the chain corresponds to 510 to 547 (GLLGPRVLQKSEHRTEEEVQGETSAHIQRKPEDSITEA). Residues 522–547 (HRTEEEVQGETSAHIQRKPEDSITEA) are disordered. Positions 538-547 (RKPEDSITEA) are enriched in basic and acidic residues.

It belongs to the monovalent cation:proton antiporter 1 (CPA1) transporter (TC 2.A.36) family. Homodimer; dimerization is essential for SLC9B2 activity. Lipids seem to play a role in the stabilization of the dimerization subdomain. In terms of tissue distribution, widely expressed. However expression seems to be restricted to specific cell types within individual organs, e.g. osteoclasts in the bone, distal tubules of the kidney or beta-cells of Langerhans islets. In sperm specifically present in the principal piece of sperm tail (at protein level).

It localises to the cell membrane. It is found in the mitochondrion membrane. The protein resides in the endosome membrane. Its subcellular location is the lysosome membrane. The protein localises to the recycling endosome membrane. It localises to the cytoplasmic vesicle. It is found in the secretory vesicle. The protein resides in the synaptic vesicle membrane. Its subcellular location is the cell projection. The protein localises to the cilium. It localises to the flagellum membrane. It is found in the basolateral cell membrane. The protein resides in the apical cell membrane. It carries out the reaction Na(+)(in) + H(+)(out) = Na(+)(out) + H(+)(in). The catalysed reaction is Li(+)(out) + H(+)(in) = Li(+)(in) + H(+)(out). It catalyses the reaction Li(+)(in) + Na(+)(out) = Li(+)(out) + Na(+)(in). With respect to regulation, allosterically inhibited by the N-terminal domain. Inhibited by phloretin. Functionally, electroneutral Na(+) Li(+)/H(+) antiporter that extrudes Na(+) or Li(+) in exchange for external protons across the membrane. Uses the proton gradient/membrane potential to extrude sodium. Contributes to the regulation of intracellular pH and sodium homeostasis. Also able to mediate Na(+)/Li(+) antiporter activity in kidney. May play a physiological role in renal tubular function and blood pressure homeostasis. Plays an important role for insulin secretion and clathrin-mediated endocytosis in beta-cells. Involved in sperm motility and fertility. It is controversial whether SLC9B2 plays a role in osteoclast differentiation or not. The polypeptide is Sodium/hydrogen exchanger 9B2 (Mus musculus (Mouse)).